The following is a 345-amino-acid chain: Phosphate acyltransferase (345 aa).

The protein belongs to the PlsX family. In terms of assembly, homodimer. Probably interacts with PlsY.

It is found in the cytoplasm. It carries out the reaction a fatty acyl-[ACP] + phosphate = an acyl phosphate + holo-[ACP]. It functions in the pathway lipid metabolism; phospholipid metabolism. Functionally, catalyzes the reversible formation of acyl-phosphate (acyl-PO(4)) from acyl-[acyl-carrier-protein] (acyl-ACP). This enzyme utilizes acyl-ACP as fatty acyl donor, but not acyl-CoA. This Anaplasma phagocytophilum (strain HZ) protein is Phosphate acyltransferase.